The chain runs to 445 residues: mRNA cleavage and polyadenylation factor CLP1 (445 aa).

ATP-binding positions include E33 and 131–136 (SSGKTS).

This sequence belongs to the Clp1 family. Clp1 subfamily. As to quaternary structure, component of a pre-mRNA cleavage factor complex. Interacts directly with PCF11.

It is found in the nucleus. Functionally, required for endonucleolytic cleavage during polyadenylation-dependent pre-mRNA 3'-end formation. This Eremothecium gossypii (strain ATCC 10895 / CBS 109.51 / FGSC 9923 / NRRL Y-1056) (Yeast) protein is mRNA cleavage and polyadenylation factor CLP1.